Reading from the N-terminus, the 676-residue chain is DNA-directed RNA polymerase subunit beta' (676 aa).

Zn(2+)-binding residues include C69, C71, C87, and C90. D489, D491, and D493 together coordinate Mg(2+).

The protein belongs to the RNA polymerase beta' chain family. RpoC1 subfamily. In terms of assembly, in plastids the minimal PEP RNA polymerase catalytic core is composed of four subunits: alpha, beta, beta', and beta''. When a (nuclear-encoded) sigma factor is associated with the core the holoenzyme is formed, which can initiate transcription. Requires Mg(2+) as cofactor. Zn(2+) is required as a cofactor.

The protein resides in the plastid. It is found in the chloroplast. The enzyme catalyses RNA(n) + a ribonucleoside 5'-triphosphate = RNA(n+1) + diphosphate. DNA-dependent RNA polymerase catalyzes the transcription of DNA into RNA using the four ribonucleoside triphosphates as substrates. The protein is DNA-directed RNA polymerase subunit beta' of Lolium perenne (Perennial ryegrass).